A 423-amino-acid polypeptide reads, in one-letter code: Glutamate-1-semialdehyde 2,1-aminomutase (423 aa).

Lys-262 is modified (N6-(pyridoxal phosphate)lysine).

It belongs to the class-III pyridoxal-phosphate-dependent aminotransferase family. HemL subfamily. As to quaternary structure, homodimer. Requires pyridoxal 5'-phosphate as cofactor.

The protein localises to the cytoplasm. It carries out the reaction (S)-4-amino-5-oxopentanoate = 5-aminolevulinate. It functions in the pathway porphyrin-containing compound metabolism; protoporphyrin-IX biosynthesis; 5-aminolevulinate from L-glutamyl-tRNA(Glu): step 2/2. This is Glutamate-1-semialdehyde 2,1-aminomutase from Saccharophagus degradans (strain 2-40 / ATCC 43961 / DSM 17024).